An 88-amino-acid polypeptide reads, in one-letter code: Small ribosomal subunit protein bS16 (88 aa).

Belongs to the bacterial ribosomal protein bS16 family.

The chain is Small ribosomal subunit protein bS16 from Thermus aquaticus.